A 361-amino-acid polypeptide reads, in one-letter code: Molybdopterin synthase catalytic subunit (361 aa).

Substrate is bound by residues 101–102, K117, and 124–126; these read HR and KKE.

Belongs to the MoaE family. MOCS2B subfamily. As to quaternary structure, heterotetramer; composed of 2 small (Mocs2A) and 2 large (Mocs2B) subunits.

It is found in the cytoplasm. It carries out the reaction 2 [molybdopterin-synthase sulfur-carrier protein]-C-terminal-Gly-aminoethanethioate + cyclic pyranopterin phosphate + H2O = molybdopterin + 2 [molybdopterin-synthase sulfur-carrier protein]-C-terminal Gly-Gly + 2 H(+). It participates in cofactor biosynthesis; molybdopterin biosynthesis. In terms of biological role, catalytic subunit of the molybdopterin synthase complex, a complex that catalyzes the conversion of precursor Z into molybdopterin. Acts by mediating the incorporation of 2 sulfur atoms from thiocarboxylated Mocs2A into precursor Z to generate a dithiolene group. The protein is Molybdopterin synthase catalytic subunit of Drosophila pseudoobscura pseudoobscura (Fruit fly).